Here is a 70-residue protein sequence, read N- to C-terminus: UPF0270 protein VS_2853 (70 aa).

It belongs to the UPF0270 family.

The polypeptide is UPF0270 protein VS_2853 (Vibrio atlanticus (strain LGP32) (Vibrio splendidus (strain Mel32))).